The primary structure comprises 280 residues: SPX domain-containing protein 2 (280 aa).

Residues 1-162 (MKFGKSLSSQ…GSMIRLPFVQ (162 aa)) form the SPX domain. 2 disordered regions span residues 191–244 (PTNE…KSTV) and 257–280 (GSSTVSVFSLPPLHGSNGQDEPGR).

As to quaternary structure, interacts (via SPX domain) with PHR2 (via C-terminus). Interacts with RLI1 in the nucleus to prevents its positive regulation of leaf inclination during phosphate (Pi) starvation. In terms of tissue distribution, predominantly expressed in roots, leaves and seeds. Localized in leaves lamina joints.

Its subcellular location is the nucleus. Its function is as follows. Inhibits PHR2 DNA-binding activity via a phosphate (Pi)-dependent protein interaction. Together with SPX1, plays a negative role in the regulation of leaf inclination by preventing RLI1 transcription factor activity in Pi depleted conditions. This is SPX domain-containing protein 2 from Oryza sativa subsp. japonica (Rice).